Here is a 290-residue protein sequence, read N- to C-terminus: MFKFFRNKLQSLFKKNISLDLIEDAESLFYEADFGTELTEELCARLRRTKKADASTIKDLITVLLRESLEGLPSQASQSSQTRPIVSLLLGTNGSGKTTTAAKLAHYYKERSESVMLVATDTFRAAGMDQARLWANELGCGFVSGQPGGDAAAIAFDGIQSAIARGYSRVIIDTSGRLHVHGNLMKELSKIVSVCGKALEGAPHEIFMTVDSTLGNNAIEQVRVFHDVVPLSGLIFTKVDGSAKGGTLFQIAKRLKIPTKFIGYGESLKDLNEFDLDLFLNKLFPEVEKI.

Residues 91–98 (GTNGSGKT), 173–177 (DTSGR), and 237–240 (TKVD) contribute to the GTP site.

It belongs to the GTP-binding SRP family. FtsY subfamily. Part of the signal recognition particle protein translocation system, which is composed of SRP and FtsY.

It localises to the cell inner membrane. Its subcellular location is the cytoplasm. The catalysed reaction is GTP + H2O = GDP + phosphate + H(+). In terms of biological role, involved in targeting and insertion of nascent membrane proteins into the cytoplasmic membrane. Acts as a receptor for the complex formed by the signal recognition particle (SRP) and the ribosome-nascent chain (RNC). This Chlamydia pneumoniae (Chlamydophila pneumoniae) protein is Signal recognition particle receptor FtsY.